The primary structure comprises 921 residues: Dual serine/threonine and tyrosine protein kinase (921 aa).

Residues 645 to 899 enclose the Protein kinase domain; the sequence is PKLGRELGRG…PLLGIVEPSL (255 aa). ATP contacts are provided by residues 651–659 and lysine 674; that span reads LGRGQYGVV. The Proton acceptor role is filled by aspartate 770.

This sequence belongs to the protein kinase superfamily. Ser/Thr protein kinase family.

It is found in the cytoplasm. The protein localises to the cell membrane. It localises to the apical cell membrane. Its subcellular location is the basolateral cell membrane. The protein resides in the cell junction. It catalyses the reaction L-seryl-[protein] + ATP = O-phospho-L-seryl-[protein] + ADP + H(+). It carries out the reaction L-threonyl-[protein] + ATP = O-phospho-L-threonyl-[protein] + ADP + H(+). The catalysed reaction is L-tyrosyl-[protein] + ATP = O-phospho-L-tyrosyl-[protein] + ADP + H(+). May act as a positive regulator of ERK phosphorylation downstream of fibroblast growth factor-receptor activation. May induce both caspase-dependent apoptosis and caspase-independent cell death. May play a role in the embryonic development. The polypeptide is Dual serine/threonine and tyrosine protein kinase (dstyk) (Takifugu rubripes (Japanese pufferfish)).